The primary structure comprises 381 residues: MPFGNTHNKYKLNYKSEEEYPDLSKHNNHMAKVLTPDLYKKLRDKETPSGFTLDDVIQTGVDNPGHPFIMTVGCVAGDEESYTVFKDLFDPIIQDRHGGFKPTDKHKTDLNHENLKGGDDLDPHYVLSSRVRTGRSIKGYTLPPHCSRGERRAVEKLSVEALNSLTGEFKGKYYPLKSMTEQEQQQLIDDHFLFDKPVSPLLLASGMARDWPDARGIWHNDNKSFLVWVNEEDHLRVISMEKGGNMKEVFRRFCVGLQKIEEIFKKAGHPFMWNEHLGYVLTCPSNLGTGLRGGVHVKLAHLSKHPKFEEILTRLRLQKRGTGGVDTAAVGSVFDISNADRLGSSEVEQVQLVVDGVKLMVEMEKKLEKGQSIDDMIPAQK.

In terms of domain architecture, Phosphagen kinase N-terminal spans 11–98 (KLNYKSEEEY…FDPIIQDRHG (88 aa)). In terms of domain architecture, Phosphagen kinase C-terminal spans 125-367 (YVLSSRVRTG…KLMVEMEKKL (243 aa)). 128 to 132 (SSRVR) provides a ligand contact to ATP. Ser164 is subject to Phosphoserine. Thr166 bears the Phosphothreonine mark. Ser178 is modified (phosphoserine). Thr180 bears the Phosphothreonine mark. An ATP-binding site is contributed by His191. Ser199 is modified (phosphoserine). ATP contacts are provided by Arg236 and Arg292. A phosphothreonine mark is found at Thr313 and Thr322. 320-325 (RGTGGV) is an ATP binding site. The residue at position 372 (Ser372) is a Phosphoserine.

The protein belongs to the ATP:guanido phosphotransferase family. Dimer of identical or non-identical chains, which can be either B (brain type) or M (muscle type). With MM being the major form in skeletal muscle and myocardium, MB existing in myocardium, and BB existing in many tissues, especially brain.

The enzyme catalyses creatine + ATP = N-phosphocreatine + ADP + H(+). In terms of biological role, reversibly catalyzes the transfer of phosphate between ATP and various phosphogens (e.g. creatine phosphate). Creatine kinase isoenzymes play a central role in energy transduction in tissues with large, fluctuating energy demands, such as skeletal muscle, heart, brain and spermatozoa. The protein is Creatine kinase M-type (CKM) of Oryctolagus cuniculus (Rabbit).